Reading from the N-terminus, the 194-residue chain is Large ribosomal subunit protein eL15 (194 aa).

Residues 164–194 (SAGKKGRGLRNKGIGAEKVRPSIRAHGRRGK) are disordered. Over residues 184 to 194 (PSIRAHGRRGK) the composition is skewed to basic residues.

The protein belongs to the eukaryotic ribosomal protein eL15 family.

The sequence is that of Large ribosomal subunit protein eL15 (rpl15e) from Methanocaldococcus jannaschii (strain ATCC 43067 / DSM 2661 / JAL-1 / JCM 10045 / NBRC 100440) (Methanococcus jannaschii).